Consider the following 412-residue polypeptide: Serine hydroxymethyltransferase (412 aa).

(6S)-5,6,7,8-tetrahydrofolate-binding positions include L117 and G121 to L123. K226 bears the N6-(pyridoxal phosphate)lysine mark.

This sequence belongs to the SHMT family. As to quaternary structure, homodimer. Requires pyridoxal 5'-phosphate as cofactor.

The protein localises to the cytoplasm. It catalyses the reaction (6R)-5,10-methylene-5,6,7,8-tetrahydrofolate + glycine + H2O = (6S)-5,6,7,8-tetrahydrofolate + L-serine. Its pathway is one-carbon metabolism; tetrahydrofolate interconversion. It participates in amino-acid biosynthesis; glycine biosynthesis; glycine from L-serine: step 1/1. Its function is as follows. Catalyzes the reversible interconversion of serine and glycine with tetrahydrofolate (THF) serving as the one-carbon carrier. This reaction serves as the major source of one-carbon groups required for the biosynthesis of purines, thymidylate, methionine, and other important biomolecules. Also exhibits THF-independent aldolase activity toward beta-hydroxyamino acids, producing glycine and aldehydes, via a retro-aldol mechanism. This chain is Serine hydroxymethyltransferase, found in Natranaerobius thermophilus (strain ATCC BAA-1301 / DSM 18059 / JW/NM-WN-LF).